Consider the following 338-residue polypeptide: Ketol-acid reductoisomerase (NADP(+)) (338 aa).

The KARI N-terminal Rossmann domain occupies 1–181; sequence MKVYYDKDAD…GGTKGGVIET (181 aa). NADP(+) contacts are provided by residues 24–27, Arg47, and Ser52; that span reads YGSQ. His107 is a catalytic residue. Residue Gly133 participates in NADP(+) binding. Residues 182-327 form the KARI C-terminal knotted domain; that stretch reads NFKEETETDL…GQLRDMMPWI (146 aa). Mg(2+) is bound by residues Asp190, Glu194, Glu226, and Glu230. Residue Ser251 participates in substrate binding.

It belongs to the ketol-acid reductoisomerase family. It depends on Mg(2+) as a cofactor.

It carries out the reaction (2R)-2,3-dihydroxy-3-methylbutanoate + NADP(+) = (2S)-2-acetolactate + NADPH + H(+). The catalysed reaction is (2R,3R)-2,3-dihydroxy-3-methylpentanoate + NADP(+) = (S)-2-ethyl-2-hydroxy-3-oxobutanoate + NADPH + H(+). The protein operates within amino-acid biosynthesis; L-isoleucine biosynthesis; L-isoleucine from 2-oxobutanoate: step 2/4. It functions in the pathway amino-acid biosynthesis; L-valine biosynthesis; L-valine from pyruvate: step 2/4. Its function is as follows. Involved in the biosynthesis of branched-chain amino acids (BCAA). Catalyzes an alkyl-migration followed by a ketol-acid reduction of (S)-2-acetolactate (S2AL) to yield (R)-2,3-dihydroxy-isovalerate. In the isomerase reaction, S2AL is rearranged via a Mg-dependent methyl migration to produce 3-hydroxy-3-methyl-2-ketobutyrate (HMKB). In the reductase reaction, this 2-ketoacid undergoes a metal-dependent reduction by NADPH to yield (R)-2,3-dihydroxy-isovalerate. This Azoarcus sp. (strain BH72) protein is Ketol-acid reductoisomerase (NADP(+)).